The chain runs to 461 residues: ATP-dependent protease ATPase subunit HslU (461 aa).

ATP contacts are provided by residues Ile-18, 60–65 (GVGKTE), Asp-274, Glu-339, and Arg-411.

It belongs to the ClpX chaperone family. HslU subfamily. In terms of assembly, a double ring-shaped homohexamer of HslV is capped on each side by a ring-shaped HslU homohexamer. The assembly of the HslU/HslV complex is dependent on binding of ATP.

The protein localises to the cytoplasm. Functionally, ATPase subunit of a proteasome-like degradation complex; this subunit has chaperone activity. The binding of ATP and its subsequent hydrolysis by HslU are essential for unfolding of protein substrates subsequently hydrolyzed by HslV. HslU recognizes the N-terminal part of its protein substrates and unfolds these before they are guided to HslV for hydrolysis. The chain is ATP-dependent protease ATPase subunit HslU from Carboxydothermus hydrogenoformans (strain ATCC BAA-161 / DSM 6008 / Z-2901).